The primary structure comprises 615 residues: Chaperone protein DnaK (615 aa).

Thr-195 carries the phosphothreonine; by autocatalysis modification. A disordered region spans residues 592–615; sequence EKGAQAASGKGPDDVIDADYKPAD.

This sequence belongs to the heat shock protein 70 family.

Acts as a chaperone. In Thermus thermophilus (strain ATCC BAA-163 / DSM 7039 / HB27), this protein is Chaperone protein DnaK.